The following is a 748-amino-acid chain: Translation factor GUF1 homolog 2, mitochondrial (748 aa).

Residues 1–29 (MRVGCCLLLKPLRQRLCTASISSRHIMRW) constitute a mitochondrion transit peptide. The tr-type G domain occupies 94–276 (SHIRNVAVVA…AIIERVPPPT (183 aa)). Residues 103-110 (AHVDHGKT), 167-171 (DTPGH), and 221-224 (TKMD) each bind GTP.

The protein belongs to the TRAFAC class translation factor GTPase superfamily. Classic translation factor GTPase family. LepA subfamily.

The protein localises to the mitochondrion inner membrane. The catalysed reaction is GTP + H2O = GDP + phosphate + H(+). In terms of biological role, promotes mitochondrial protein synthesis. May act as a fidelity factor of the translation reaction, by catalyzing a one-codon backward translocation of tRNAs on improperly translocated ribosomes. Binds to mitochondrial ribosomes in a GTP-dependent manner. This Trypanosoma cruzi (strain CL Brener) protein is Translation factor GUF1 homolog 2, mitochondrial.